The following is a 415-amino-acid chain: Squalene synthase 11 (415 aa).

Transmembrane regions (helical) follow at residues 281–301 (AIFR…ALCF) and 392–412 (LIII…SNLP).

It belongs to the phytoene/squalene synthase family. Mg(2+) is required as a cofactor. Mn(2+) serves as cofactor.

The protein resides in the endoplasmic reticulum membrane. The catalysed reaction is 2 (2E,6E)-farnesyl diphosphate + NADH + H(+) = squalene + 2 diphosphate + NAD(+). It catalyses the reaction 2 (2E,6E)-farnesyl diphosphate + NADPH + H(+) = squalene + 2 diphosphate + NADP(+). It functions in the pathway terpene metabolism; lanosterol biosynthesis; lanosterol from farnesyl diphosphate: step 1/3. Component of the triterpene saponins (e.g. ginsenosides or panaxosides) and phytosterols biosynthetic pathways. Catalyzes the biosynthesis of squalene. This Panax ginseng (Korean ginseng) protein is Squalene synthase 11.